Consider the following 364-residue polypeptide: Anionic peroxidase (364 aa).

An N-terminal signal peptide occupies residues 1-20 (MASFMKQLSLVLSFIALALA). Residues 21-66 (GCAVYQNTQTAMKDQLKVTPTWLDNTLKSTNLLSLGLGKPSGGKLG) constitute a propeptide that is removed on maturation. The Proton acceptor role is filled by His-99. 4 residues coordinate Ca(2+): Asp-100, Val-103, Gly-105, and Asp-107. Cysteines 101 and 106 form a disulfide. Residues Asn-113, Asn-188, Asn-202, and Asn-216 are each glycosylated (N-linked (GlcNAc...) asparagine). Cystine bridges form between Cys-155–Cys-343 and Cys-234–Cys-255. His-227 contacts heme b. Thr-228 contacts Ca(2+). Asn-254 and Asn-260 each carry an N-linked (GlcNAc...) asparagine glycan. Positions 268, 270, and 275 each coordinate Ca(2+). Asn-299 is a glycosylation site (N-linked (GlcNAc...) asparagine).

This sequence belongs to the peroxidase family. Classical plant (class III) peroxidase subfamily. Ca(2+) serves as cofactor. Heme b is required as a cofactor. In terms of tissue distribution, highly expressed in suspension cultured cells and calli. Weak expression also found in the stems of intact plants. No expression in leaf, tuberous root and non-tuberous root.

The protein resides in the secreted. The enzyme catalyses 2 a phenolic donor + H2O2 = 2 a phenolic radical donor + 2 H2O. In terms of biological role, removal of H(2)O(2), oxidation of toxic reductants, biosynthesis and degradation of lignin, suberization, auxin catabolism, response to environmental stresses such as wounding, pathogen attack and oxidative stress. These functions might be dependent on each isozyme/isoform in each plant tissue. May contribute to protection against cold-induced oxidative stress. This Ipomoea batatas (Sweet potato) protein is Anionic peroxidase.